The chain runs to 228 residues: Small ribosomal subunit protein uS7m (228 aa).

A mitochondrion-targeting transit peptide spans 1–33 (MAASVRHLLKPWTPSLCLMRWSRYNPYYLDPEP).

This sequence belongs to the universal ribosomal protein uS7 family. As to quaternary structure, component of the mitochondrial ribosome small subunit (28S) which comprises a 12S rRNA and about 30 distinct proteins.

The protein localises to the mitochondrion. The chain is Small ribosomal subunit protein uS7m (mrps7) from Danio rerio (Zebrafish).